A 461-amino-acid polypeptide reads, in one-letter code: Transcription factor GTE3, chloroplastic (461 aa).

Gly residues predominate over residues 1–11; that stretch reads MASGPIAGGGV. A disordered region spans residues 1-41; it reads MASGPIAGGGVSKTKHKWSDSGNKSQKRSKPTVANSNSLGL. The N-terminal 51 residues, 1-51, are a transit peptide targeting the chloroplast; the sequence is MASGPIAGGGVSKTKHKWSDSGNKSQKRSKPTVANSNSLGLEDNHQMMKIS. Positions 114 to 220 constitute a Bromo domain; it reads KGTVQILKSC…NLFEEKWVPL (107 aa). The 82-residue stretch at 298 to 379 folds into the NET domain; that stretch reads LVEEASANRD…EYKESLSKKK (82 aa). Basic and acidic residues predominate over residues 376 to 392; it reads SKKKEEQGLDSERDAES. The segment at 376–461 is disordered; it reads SKKKEEQGLD…SSGHESDTGN (86 aa). Residues 393 to 412 show a composition bias toward polar residues; the sequence is FHNSVHESNTLVTGLESSKV. Positions 429 to 451 are enriched in low complexity; sequence GGSSSSNSSSSGSGSGSSGSDSD. Over residues 452 to 461 the composition is skewed to basic and acidic residues; sequence SSGHESDTGN.

Interacts with SIZ1 (via PHD domain). Post-translationally, sumoylated by SIZ1. Sumoylation reduces capacity to bind to acetylated histone H3.

It localises to the plastid. The protein localises to the chloroplast. Functionally, probable transcription factor that binds to acetylated histone H3. In Arabidopsis thaliana (Mouse-ear cress), this protein is Transcription factor GTE3, chloroplastic (GTE3).